The sequence spans 390 residues: Formate-dependent phosphoribosylglycinamide formyltransferase (390 aa).

Residues 18-19 (EL) and E78 each bind N(1)-(5-phospho-beta-D-ribosyl)glycinamide. ATP contacts are provided by residues R110, K151, 156-161 (SSGKGQ), 191-194 (EEFL), and E199. Residues 115–305 (DLASKELNIK…EFELHLRAFL (191 aa)) form the ATP-grasp domain. The Mg(2+) site is built by E264 and E276. Residues D283, K353, and 360–361 (RR) contribute to the N(1)-(5-phospho-beta-D-ribosyl)glycinamide site.

The protein belongs to the PurK/PurT family. Homodimer.

The enzyme catalyses N(1)-(5-phospho-beta-D-ribosyl)glycinamide + formate + ATP = N(2)-formyl-N(1)-(5-phospho-beta-D-ribosyl)glycinamide + ADP + phosphate + H(+). The protein operates within purine metabolism; IMP biosynthesis via de novo pathway; N(2)-formyl-N(1)-(5-phospho-D-ribosyl)glycinamide from N(1)-(5-phospho-D-ribosyl)glycinamide (formate route): step 1/1. In terms of biological role, involved in the de novo purine biosynthesis. Catalyzes the transfer of formate to 5-phospho-ribosyl-glycinamide (GAR), producing 5-phospho-ribosyl-N-formylglycinamide (FGAR). Formate is provided by PurU via hydrolysis of 10-formyl-tetrahydrofolate. In Prochlorococcus marinus (strain MIT 9515), this protein is Formate-dependent phosphoribosylglycinamide formyltransferase.